The chain runs to 375 residues: Probable butyrate kinase 2 (375 aa).

Belongs to the acetokinase family.

The protein resides in the cytoplasm. It carries out the reaction butanoate + ATP = butanoyl phosphate + ADP. In Thermotoga maritima (strain ATCC 43589 / DSM 3109 / JCM 10099 / NBRC 100826 / MSB8), this protein is Probable butyrate kinase 2.